Here is a 329-residue protein sequence, read N- to C-terminus: 3-dehydroquinate synthase (329 aa).

Belongs to the archaeal-type DHQ synthase family.

The enzyme catalyses 2-amino-2,3,7-trideoxy-D-lyxo-hept-6-ulosonate + NAD(+) + H2O = 3-dehydroquinate + NH4(+) + NADH + H(+). Catalyzes the oxidative deamination and cyclization of 2-amino-3,7-dideoxy-D-threo-hept-6-ulosonic acid (ADH) to yield 3-dehydroquinate (DHQ), which is fed into the canonical shikimic pathway of aromatic amino acid biosynthesis. In Methanoregula boonei (strain DSM 21154 / JCM 14090 / 6A8), this protein is 3-dehydroquinate synthase.